The following is a 166-amino-acid chain: Endoribonuclease YbeY (166 aa).

Residues H132, H136, and H142 each coordinate Zn(2+).

Belongs to the endoribonuclease YbeY family. The cofactor is Zn(2+).

The protein localises to the cytoplasm. Single strand-specific metallo-endoribonuclease involved in late-stage 70S ribosome quality control and in maturation of the 3' terminus of the 16S rRNA. The chain is Endoribonuclease YbeY from Clostridium botulinum (strain 657 / Type Ba4).